Here is a 1195-residue protein sequence, read N- to C-terminus: Chromosome partition protein Smc (1195 aa).

Position 33-40 (33-40) interacts with ATP; sequence PNGSGKSN. Coiled coils occupy residues 185–241, 273–348, and 380–528; these read GVAQ…RQEQ, DAAT…IQAL, and QYQQ…QETQ. The 117-residue stretch at 542 to 658 folds into the SMC hinge domain; it reads PGVHGLVAQL…FERLDQARRY (117 aa). Residues 698 to 1043 adopt a coiled-coil conformation; that stretch reads GESAEVRAIR…ELLLRIENFT (346 aa).

It belongs to the SMC family. Homodimer.

The protein localises to the cytoplasm. Its function is as follows. Required for chromosome condensation and partitioning. This is Chromosome partition protein Smc from Synechococcus sp. (strain ATCC 27144 / PCC 6301 / SAUG 1402/1) (Anacystis nidulans).